The sequence spans 297 residues: Phosphoribosylaminoimidazole-succinocarboxamide synthase (297 aa).

The protein belongs to the SAICAR synthetase family.

The enzyme catalyses 5-amino-1-(5-phospho-D-ribosyl)imidazole-4-carboxylate + L-aspartate + ATP = (2S)-2-[5-amino-1-(5-phospho-beta-D-ribosyl)imidazole-4-carboxamido]succinate + ADP + phosphate + 2 H(+). It functions in the pathway purine metabolism; IMP biosynthesis via de novo pathway; 5-amino-1-(5-phospho-D-ribosyl)imidazole-4-carboxamide from 5-amino-1-(5-phospho-D-ribosyl)imidazole-4-carboxylate: step 1/2. The chain is Phosphoribosylaminoimidazole-succinocarboxamide synthase from Mycobacterium sp. (strain JLS).